We begin with the raw amino-acid sequence, 496 residues long: Iroquois-class homeodomain protein irx-4-A (496 aa).

The segment at residues 141–203 (GSSRRKNATR…NARRRLKKEN (63 aa)) is a DNA-binding region (homeobox; TALE-type). A disordered region spans residues 203–246 (NKMTWPPRNKCSDEKRPYDEEEEEEEEEEDSQKATIKNEKKTVD). Acidic residues predominate over residues 221 to 232 (DEEEEEEEEEED).

It belongs to the TALE/IRO homeobox family. As to expression, expressed in the neural plate in overlapping patterns with other irx members, which all share an anterior border of expression. At stage 20, expressed in a subset of cells in the developing hindbrain with expression appearing above the otic vesicle by stage 26. Expression in retina cells begins at stage 28, continuing at later stages and is limited to a subset of retinal cells of the optic cup. Also expressed in the ventricle of the heart from stage 36 (late tailbud) onwards. Only expressed in the pronephros at tadpole stage.

It localises to the nucleus. Acts partially redundantly with other irx members in neural patterning. Required for formation of the posterior forebrain, midbrain, hindbrain, and to a lesser extent, spinal cord. Patterns the neuroectoderm in both the anterior/posterior and dorsal/ventral axes. Does not appear to play a role in pronephros kidney development. The polypeptide is Iroquois-class homeodomain protein irx-4-A (irx4-a) (Xenopus laevis (African clawed frog)).